Reading from the N-terminus, the 201-residue chain is Imidazole glycerol phosphate synthase subunit HisH 1 (201 aa).

Residues 1–201 (MIALIDYKAG…LKLLENFARL (201 aa)) enclose the Glutamine amidotransferase type-1 domain. The Nucleophile role is filled by cysteine 80. Active-site residues include histidine 183 and glutamate 185.

As to quaternary structure, heterodimer of HisH and HisF.

The protein resides in the cytoplasm. It carries out the reaction 5-[(5-phospho-1-deoxy-D-ribulos-1-ylimino)methylamino]-1-(5-phospho-beta-D-ribosyl)imidazole-4-carboxamide + L-glutamine = D-erythro-1-(imidazol-4-yl)glycerol 3-phosphate + 5-amino-1-(5-phospho-beta-D-ribosyl)imidazole-4-carboxamide + L-glutamate + H(+). It catalyses the reaction L-glutamine + H2O = L-glutamate + NH4(+). The protein operates within amino-acid biosynthesis; L-histidine biosynthesis; L-histidine from 5-phospho-alpha-D-ribose 1-diphosphate: step 5/9. Functionally, IGPS catalyzes the conversion of PRFAR and glutamine to IGP, AICAR and glutamate. The HisH subunit provides the glutamine amidotransferase activity that produces the ammonia necessary to HisF for the synthesis of IGP and AICAR. This is Imidazole glycerol phosphate synthase subunit HisH 1 (hisH1) from Campylobacter jejuni subsp. jejuni serotype O:23/36 (strain 81-176).